The sequence spans 499 residues: Gamma-aminobutyric acid receptor subunit beta (499 aa).

The N-terminal stretch at 1 to 23 is a signal peptide; that stretch reads MWGIIVPFFSASLMCSLVAVVRC. Residues 24-251 are Extracellular-facing; that stretch reads QQDTDHFANV…IFQLQRNIGY (228 aa). Residues asparagine 32, asparagine 98, asparagine 106, and asparagine 152 are each glycosylated (N-linked (GlcNAc...) asparagine). A disulfide bridge links cysteine 167 with cysteine 181. 3 consecutive transmembrane segments (helical) span residues 252–273, 278–299, and 311–333; these read FIFQ…SFWI, TSAR…SNGV, and AIDI…YAAV. Topologically, residues 334–475 are cytoplasmic; it reads NYTYWGARAK…RVQDVNTIDK (142 aa). A helical membrane pass occupies residues 476–499; it reads YARLMFPLLFIIFNTSYWSVYLLT.

Belongs to the ligand-gated ion channel (TC 1.A.9) family. Gamma-aminobutyric acid receptor (TC 1.A.9.5) subfamily. As to quaternary structure, generally pentameric. There are five types of GABA(A) receptor chains: alpha, beta, gamma, delta, and rho.

It localises to the postsynaptic cell membrane. It is found in the cell membrane. In terms of biological role, GABA, an inhibitory neurotransmitter, mediates neuronal inhibition by binding to the GABA/benzodiazepine receptor and opening an integral chloride channel. The polypeptide is Gamma-aminobutyric acid receptor subunit beta (Lymnaea stagnalis (Great pond snail)).